A 149-amino-acid chain; its full sequence is Ribonuclease pancreatic (149 aa).

The N-terminal stretch at Met1–Ala25 is a signal peptide. Lys32 and Arg35 together coordinate substrate. His37 functions as the Proton acceptor in the catalytic mechanism. Cystine bridges form between Cys51-Cys109, Cys65-Cys120, Cys83-Cys135, and Cys90-Cys97. Substrate-binding positions include Lys66 to Thr70, Lys91, and Arg110. Residue His144 is the Proton donor of the active site.

The protein belongs to the pancreatic ribonuclease family. As to quaternary structure, monomer. Interacts with and forms tight 1:1 complexes with RNH1. Dimerization of two such complexes may occur. Interaction with RNH1 inhibits this protein. In terms of tissue distribution, pancreas.

It is found in the secreted. The catalysed reaction is an [RNA] containing cytidine + H2O = an [RNA]-3'-cytidine-3'-phosphate + a 5'-hydroxy-ribonucleotide-3'-[RNA].. The enzyme catalyses an [RNA] containing uridine + H2O = an [RNA]-3'-uridine-3'-phosphate + a 5'-hydroxy-ribonucleotide-3'-[RNA].. In terms of biological role, endonuclease that catalyzes the cleavage of RNA on the 3' side of pyrimidine nucleotides. Acts on single-stranded and double-stranded RNA. The sequence is that of Ribonuclease pancreatic (RNASE1) from Uranomys ruddi (White-bellied brush-furred rat).